We begin with the raw amino-acid sequence, 445 residues long: Phosphoglucosamine mutase (445 aa).

The active-site Phosphoserine intermediate is the S99. Residues S99, D242, D244, and D246 each coordinate Mg(2+). S99 is modified (phosphoserine).

This sequence belongs to the phosphohexose mutase family. The cofactor is Mg(2+). In terms of processing, activated by phosphorylation.

The enzyme catalyses alpha-D-glucosamine 1-phosphate = D-glucosamine 6-phosphate. Catalyzes the conversion of glucosamine-6-phosphate to glucosamine-1-phosphate. In Nitratiruptor sp. (strain SB155-2), this protein is Phosphoglucosamine mutase.